A 1085-amino-acid polypeptide reads, in one-letter code: DNA repair and recombination protein RAD26 (1085 aa).

A Phosphoserine modification is found at S30. 2 disordered regions span residues 118-141 and 190-219; these read KEQV…GETE and NLTD…EEND. The span at 128 to 141 shows a compositional bias: basic and acidic residues; sequence KGSKEGLQRPGETE. Positions 210 to 219 are enriched in acidic residues; sequence SEDDEEEEND. Positions 309–518 constitute a Helicase ATP-binding domain; it reads YELYQQNCGG…WSLFDFIFPG (210 aa). An ATP-binding site is contributed by 322–329; the sequence is DEMGLGKT. A DEGH box motif is present at residues 469–472; it reads DEGH. The 164-residue stretch at 655–818 folds into the Helicase C-terminal domain; sequence VVKQLLLLWH…KRFFKIHELH (164 aa).

This sequence belongs to the SNF2/RAD54 helicase family.

Its subcellular location is the nucleus. The enzyme catalyses ATP + H2O = ADP + phosphate + H(+). May be involved in the preferential repair of active genes. The protein is DNA repair and recombination protein RAD26 (RAD26) of Saccharomyces cerevisiae (strain ATCC 204508 / S288c) (Baker's yeast).